Consider the following 1163-residue polypeptide: Protein phosphatase 1 regulatory subunit 26 (1163 aa).

A compositionally biased stretch (basic and acidic residues) spans 65–83 (HERLTQRGQRAERSRDTRL). Disordered regions lie at residues 65-91 (HERLTQRGQRAERSRDTRLAPKPAVCK), 144-253 (RGGA…TSAR), 266-393 (RKPP…KKKL), 463-496 (APMEGSDRPPSRNPLFCPQPMPPRSEGDSSNIDS), 514-653 (VGSP…DEDL), 672-929 (RDPR…TATA), and 1073-1163 (TQPG…GLKL). Polar residues-rich tracts occupy residues 163 to 179 (HSSTLPIPCPSQLTPGS) and 189 to 201 (DQGSTSPASMSSE). Residues 208–236 (IRAEIEQFLNEKRQHENPKCDGFVDKKSD) are compositionally biased toward basic and acidic residues. The segment covering 273 to 297 (KMSTQQRNFQPKPTTEPETPVSTKL) has biased composition (polar residues). Positions 315–324 (MPARRSKRIR) are enriched in basic residues. Low complexity predominate over residues 515–535 (GSPQPAQGPLSSPGPSGQPGI). Composition is skewed to basic and acidic residues over residues 566–581 (KIREGRESTQDADHIQ) and 634–645 (ATEKESSEDKSS). Residues 672–682 (RDPRASCKKVR) show a composition bias toward basic residues. A compositionally biased stretch (low complexity) spans 766-780 (TGASGHPPSASSPTS). The span at 783-792 (SAVDSDDSIE) shows a compositional bias: acidic residues. 2 stretches are compositionally biased toward basic and acidic residues: residues 793 to 808 (LEIRRFLAEKAKESIR) and 850 to 859 (EGRRGPERAR). A compositionally biased stretch (polar residues) spans 860-871 (TQATGLLSQSGK). A compositionally biased stretch (low complexity) spans 901–910 (SSAKASPPSR). A compositionally biased stretch (basic and acidic residues) spans 1105–1131 (QQDRRNSASEDKVLDLRYRHRVDREPQ). S1111 is modified (phosphoserine). Composition is skewed to polar residues over residues 1133 to 1146 (QETLGSDASEFSDT) and 1154 to 1163 (ATVSSKGLKL).

Interacts with UTP20 and PPP1CA.

It is found in the nucleus. Its subcellular location is the nucleolus. In terms of biological role, inhibits phosphatase activity of protein phosphatase 1 (PP1) complexes. May positively regulate cell proliferation. This is Protein phosphatase 1 regulatory subunit 26 (Ppp1r26) from Mus musculus (Mouse).